The sequence spans 160 residues: Glyoxalase domain-containing protein 5 (160 aa).

The 121-residue stretch at R33–Y153 folds into the VOC domain.

It belongs to the glyoxalase I family.

The chain is Glyoxalase domain-containing protein 5 (glod5) from Xenopus tropicalis (Western clawed frog).